A 215-amino-acid polypeptide reads, in one-letter code: UPF0502 protein CKO_01995 (215 aa).

Belongs to the UPF0502 family.

This Citrobacter koseri (strain ATCC BAA-895 / CDC 4225-83 / SGSC4696) protein is UPF0502 protein CKO_01995.